The chain runs to 390 residues: F-box/kelch-repeat protein At4g39753 (390 aa).

Residues 1–16 (MVTFWAETAASAATTS) show a composition bias toward low complexity. The interval 1 to 33 (MVTFWAETAASAATTSKGEPPSKKRKTNPSPPP) is disordered. The region spanning 32-79 (PPSLLSLPDVLILNCLSRIPKSYYPKLSIVSKTFRDLIISIDLNHARF) is the F-box domain. Kelch repeat units lie at residues 139-192 (PLLV…VFDR), 193-243 (KIYV…MIQG), 245-286 (FYVR…WYSC), and 288-321 (PNSF…LIET).

The polypeptide is F-box/kelch-repeat protein At4g39753 (Arabidopsis thaliana (Mouse-ear cress)).